Consider the following 57-residue polypeptide: Large ribosomal subunit protein bL32c (57 aa).

Belongs to the bacterial ribosomal protein bL32 family.

The protein localises to the plastid. Its subcellular location is the chloroplast. This chain is Large ribosomal subunit protein bL32c, found in Nandina domestica (Heavenly bamboo).